A 352-amino-acid chain; its full sequence is Protein Wnt-4a (352 aa).

The signal sequence occupies residues 1–22 (MSSEYLIRSLLMLFLALFSANA). 11 disulfide bridges follow: C78/C89, C128/C136, C138/C155, C206/C220, C208/C215, C280/C312, C297/C307, C311/C351, C327/C342, C329/C339, and C334/C335. The N-linked (GlcNAc...) asparagine glycan is linked to N88. Residue S212 is the site of O-palmitoleoyl serine; by PORCN attachment. N298 carries an N-linked (GlcNAc...) asparagine glycan.

Belongs to the Wnt family. Post-translationally, palmitoleoylation is required for efficient binding to frizzled receptors. Depalmitoleoylation leads to Wnt signaling pathway inhibition. In terms of tissue distribution, caudal forebrain and neural keel, the floor plate, the gill slit and the developing pronephros.

Its subcellular location is the secreted. The protein localises to the extracellular space. The protein resides in the extracellular matrix. In terms of biological role, ligand for members of the frizzled family of seven transmembrane receptors. Plays an important role in embryonic development. The polypeptide is Protein Wnt-4a (wnt4a) (Danio rerio (Zebrafish)).